A 160-amino-acid chain; its full sequence is Transcription elongation factor GreA (160 aa).

Residues 1 to 72 (MAEKTYPMTL…QISSLETKIR (72 aa)) adopt a coiled-coil conformation.

This sequence belongs to the GreA/GreB family.

Functionally, necessary for efficient RNA polymerase transcription elongation past template-encoded arresting sites. The arresting sites in DNA have the property of trapping a certain fraction of elongating RNA polymerases that pass through, resulting in locked ternary complexes. Cleavage of the nascent transcript by cleavage factors such as GreA or GreB allows the resumption of elongation from the new 3'terminus. GreA releases sequences of 2 to 3 nucleotides. In Streptococcus pneumoniae serotype 4 (strain ATCC BAA-334 / TIGR4), this protein is Transcription elongation factor GreA.